Reading from the N-terminus, the 842-residue chain is Netrin receptor UNC5A (842 aa).

Residues 1-25 form the signal peptide; that stretch reads MAVRPGLWPALLGIVLAAWLRGSGA. Residues 26–306 lie on the Extracellular side of the membrane; that stretch reads QQSATVANPV…ASGPEDVALY (281 aa). In terms of domain architecture, Ig-like spans 44 to 141; the sequence is PHFLVEPEDV…SGTTKSQKAY (98 aa). 3 disulfides stabilise this stretch: cysteine 65–cysteine 126, cysteine 77–cysteine 124, and cysteine 170–cysteine 221. Residues asparagine 107 and asparagine 218 are each glycosylated (N-linked (GlcNAc...) asparagine). One can recognise an Ig-like C2-type domain in the interval 155–234; the sequence is PLAKEVSLEQ…NIVARRRSAS (80 aa). The region spanning 242-294 is the TSP type-1 domain; that stretch reads DGSWSPWSKWSACGLDCTHWRSRECSDPAPRNGGEECQGTDLDTRNCTSDLCV. C-linked (Man) tryptophan glycans are attached at residues tryptophan 245, tryptophan 248, and tryptophan 251. 3 disulfides stabilise this stretch: cysteine 254–cysteine 288, cysteine 258–cysteine 293, and cysteine 266–cysteine 278. Asparagine 287 carries N-linked (GlcNAc...) asparagine glycosylation. Residues 307-327 form a helical membrane-spanning segment; it reads VGLIAVAVCLVLLLLVLILVY. Over 328–842 the chain is Cytoplasmic; it reads CRKKEGLDSD…GLFTVSEAEC (515 aa). The 144-residue stretch at 441–584 folds into the ZU5 domain; it reads NMTYGTFNFL…LGRFALVGEA (144 aa). The interval 605-623 is interaction with DCC; that stretch reads SLEYNIRVYCLHDTHDALK. The region spanning 761-841 is the Death domain; that stretch reads QKIISSLDPP…AGLFTVSEAE (81 aa).

The protein belongs to the unc-5 family. Homodimer and homooligomer. Interacts with the cytoplasmic part of DCC. Interacts with MAGED1. Interacts with PRKCABP, possibly mediating some interaction with PKC. Interacts (via extracellular domain) with FLRT2 (via extracellular domain). Interacts (via extracellular domain) with FLRT3 (via extracellular domain). In terms of processing, phosphorylated on cytoplasmic tyrosine residues. Phosphorylated by PKC in vitro. Post-translationally, proteolytically cleaved by caspases during apoptosis. The cleavage does not take place when the receptor is associated with netrin ligand. Its cleavage by caspases is required to induce apoptosis. The two extracellular TSRs of UNC5A contain WxxWxxWxxC motifs that can be C-mannosylated on all tryptophans. DPY19L1 preferentially mannosylates the first two tryptophans and DPY19L3 prefers the third. C-mannosylation by DPY19L1 is required for transport of UNC5A from the endoplasmic reticulum to the cell surface.

The protein resides in the cell membrane. Its subcellular location is the membrane raft. The protein localises to the cell projection. It localises to the neuron projection. Receptor for netrin required for axon guidance. Functions in the netrin signaling pathway and promotes neurite outgrowth in response to NTN1. Mediates axon repulsion of neuronal growth cones in the developing nervous system in response to netrin. Axon repulsion in growth cones may be mediated by its association with DCC that may trigger signaling for repulsion. It also acts as a dependence receptor required for apoptosis induction when not associated with netrin ligand. The protein is Netrin receptor UNC5A (UNC5A) of Homo sapiens (Human).